The following is a 205-amino-acid chain: Proteasome subunit beta type-3 (205 aa).

Position 2 is an N-acetylserine (Ser-2). Lys-77 carries the post-translational modification N6-acetyllysine.

It belongs to the peptidase T1B family. In terms of assembly, the 26S proteasome consists of a 20S proteasome core and two 19S regulatory subunits. The 20S proteasome core is a barrel-shaped complex made of 28 subunits that are arranged in four stacked rings. The two outer rings are each formed by seven alpha subunits, and the two inner rings are formed by seven beta subunits. The proteolytic activity is exerted by three beta-subunits PSMB5, PSMB6 and PSMB7.

The protein resides in the cytoplasm. The protein localises to the nucleus. In terms of biological role, non-catalytic component of the 20S core proteasome complex involved in the proteolytic degradation of most intracellular proteins. This complex plays numerous essential roles within the cell by associating with different regulatory particles. Associated with two 19S regulatory particles, forms the 26S proteasome and thus participates in the ATP-dependent degradation of ubiquitinated proteins. The 26S proteasome plays a key role in the maintenance of protein homeostasis by removing misfolded or damaged proteins that could impair cellular functions, and by removing proteins whose functions are no longer required. Associated with the PA200 or PA28, the 20S proteasome mediates ubiquitin-independent protein degradation. This type of proteolysis is required in several pathways including spermatogenesis (20S-PA200 complex) or generation of a subset of MHC class I-presented antigenic peptides (20S-PA28 complex). The protein is Proteasome subunit beta type-3 (Psmb3) of Rattus norvegicus (Rat).